The primary structure comprises 224 residues: Prolactin-2C3 (224 aa).

The first 29 residues, 1–29, serve as a signal peptide directing secretion; sequence MLPSSIQPCSWILLLLLVNSSLLWKNVAS. N19 is a glycosylation site (N-linked (GlcNAc...) asparagine). C33 and C40 form a disulfide bridge. Residues N57, N75, and N88 are each glycosylated (N-linked (GlcNAc...) asparagine). 2 disulfides stabilise this stretch: C87–C199 and C216–C224.

The protein belongs to the somatotropin/prolactin family. N-glycosylated and sialylated. In terms of tissue distribution, expressed in placenta and hair follicles, with highest expression levels detected in the outer root sheath and no expression detected in bulb. Expressed in placenta, skin wounds, keratinocytes and weakly in embryonic fibroblasts. Expressed in brain, cerebellum and in Neuro-2a cell line. Not detected in liver, kidney, ovary, pituitary gland and brain.

It is found in the secreted. The protein localises to the endoplasmic reticulum. Its function is as follows. May have a role in embryonic development. It is likely to provide a growth stimulus to target cells in maternal and fetal tissues during the development of the embryo at mid-gestation. May play a role during wound healing and in the hair follicle cycle as a growth factor and/or an angiogenesis factor. May play a role in microvilli formation and cell proliferation of neuroblastoma cells. In Mus musculus (Mouse), this protein is Prolactin-2C3 (Prl2c3).